Consider the following 642-residue polypeptide: Assimilatory sulfite reductase (ferredoxin), chloroplastic (642 aa).

The transit peptide at 1–61 (MSSTFRAPAG…SSSSSSPIQA (61 aa)) directs the protein to the chloroplast. The disordered stretch occupies residues 46 to 74 (PVPPSASSSSSSPIQAVSTPAKPETATKR). 4 residues coordinate [4Fe-4S] cluster: C503, C509, C549, and C553. C553 contributes to the siroheme binding site.

This sequence belongs to the nitrite and sulfite reductase 4Fe-4S domain family. In terms of assembly, monomer. Interacts with ferredoxin. Siroheme is required as a cofactor. The cofactor is [4Fe-4S] cluster. Post-translationally, phosphorylated; this phosphorylation reduces DNA-binding. Present in leaves and roots.

The protein localises to the plastid. The protein resides in the chloroplast stroma. Its subcellular location is the chloroplast nucleoid. It localises to the plastid stroma. The enzyme catalyses hydrogen sulfide + 6 oxidized [2Fe-2S]-[ferredoxin] + 3 H2O = sulfite + 6 reduced [2Fe-2S]-[ferredoxin] + 7 H(+). Functionally, essential protein with sulfite reductase activity required in assimilatory sulfate reduction pathway during both primary and secondary metabolism and thus involved in development and growth. DNA-binding protein that binds to both double-stranded and single-stranded DNA without significant sequence specificity to reversibly repress the transcriptional activity of chloroplast nucleoids by promoting DNA compaction and possibly regulate DNA replication. This chain is Assimilatory sulfite reductase (ferredoxin), chloroplastic (SIR), found in Arabidopsis thaliana (Mouse-ear cress).